The following is a 435-amino-acid chain: Homogentisate 1,2-dioxygenase (435 aa).

His289 (proton acceptor) is an active-site residue. Fe cation contacts are provided by His332 and Glu338. Homogentisate is bound by residues Tyr347 and His368. His368 serves as a coordination point for Fe cation.

It belongs to the homogentisate dioxygenase family. Hexamer; dimer of trimers. Fe cation is required as a cofactor.

The enzyme catalyses homogentisate + O2 = 4-maleylacetoacetate + H(+). The protein operates within amino-acid degradation; L-phenylalanine degradation; acetoacetate and fumarate from L-phenylalanine: step 4/6. Functionally, involved in the catabolism of homogentisate (2,5-dihydroxyphenylacetate or 2,5-OH-PhAc), a central intermediate in the degradation of phenylalanine and tyrosine. Catalyzes the oxidative ring cleavage of the aromatic ring of homogentisate to yield maleylacetoacetate. The chain is Homogentisate 1,2-dioxygenase from Pseudomonas savastanoi pv. phaseolicola (strain 1448A / Race 6) (Pseudomonas syringae pv. phaseolicola (strain 1448A / Race 6)).